Here is a 367-residue protein sequence, read N- to C-terminus: Serine/threonine-protein phosphatase 2A activator 2 (367 aa).

It belongs to the PTPA-type PPIase family.

The protein localises to the cytoplasm. The enzyme catalyses [protein]-peptidylproline (omega=180) = [protein]-peptidylproline (omega=0). In terms of biological role, PPIases accelerate the folding of proteins. It catalyzes the cis-trans isomerization of proline imidic peptide bonds in oligopeptides. Acts as a regulatory subunit for PP2A-like phosphatases modulating their activity or substrate specificity, probably by inducing a conformational change in the catalytic subunit, a direct target of the PPIase. Can reactivate inactive phosphatase PP2A-phosphatase methylesterase complexes (PP2Ai) in presence of ATP and Mg(2+) by dissociating the inactive form from the complex. This is Serine/threonine-protein phosphatase 2A activator 2 (RRD2) from Debaryomyces hansenii (strain ATCC 36239 / CBS 767 / BCRC 21394 / JCM 1990 / NBRC 0083 / IGC 2968) (Yeast).